Reading from the N-terminus, the 1875-residue chain is MEMALRPQSLLCPRSRLKVVIRPASSASGGGLAQYFLMTRRYTGSRIVRCMVSSSDCPNRKAKRTISLHTEVASSRGYAPRIAAESSIQEREHINSDEETFDTYNRLLRNESTEWKKLDTTEVDLSQDVSSSSMRKVDATDEAKLDILEDDLPRNLLNGVTMGEVDMLDEAGAEDDVFEVDLSALHNSTVGKMDAVNEVGTENDLFEVDLSALHSAAVGKVDVVDGAKAKEDLFEMDSLALHSVTMGKVDAINAAGAEGDKFEVDLSALASNNSMIEAVNVMDEAKAIEDTLEVDLSGNATSSSTYGEVKFEVDSLGNTSSTVMYGPADGAYEPRSDEVTFKVDSSENASNNVMYGRADVVDESWADEGIFEVDFFTNASSGAEYGKVDVVDEAKTDDFTFEIDSLEKDSNNKMHGKAHMVDEAWDDEAIFEVDLFGNASSIPIYGEVNVLDEARADDGKFEVDLLGNTSSNSTHEEVDVVDEAQTGEATFEVDLLGNALSSAIYKEVPVMGGAQDDEVDVDFSINASITETEKEADAVDEARVEDETFDMDLVGKQISIDSMNDDVVEEGTKHHRYPMLSSAFIEVKTIHETPVSLKPELMSVVMDQEQDKPISSVYQQEGSIFNLHAENQSTVDFHEREQMAITFDKQKESVAKLSKEDQQTAGLPEQNMSFDGVHRKSQSIIGLPFQHQSIVSSPEKYRSIVGFHGQNQSIISSHKQDKSIVGVPKKIQSIVGSTKHDDSIVGFRKQDRSIVSVPEQKQSIVGFHKQDLSIVAVSEQNLSIVAIPRESQSKQISIVRRHDPLHLKEVETKDRDGISKKSGGDDDLPHMLFEEELSQVEDVARAIAYKKQHEVDVISLTPDIQESPQDNIDPQELRRMLQELADQNCSMGNKLFVFPEAVKANSTIDVYLNRNLSALANEPDVHIKGAFNSWRWRPFTERLHKSELSGDWWSCKLHIPKEAYRLDFVFFNGRLVYDNNDSNDFVLQVESTMDEDSFEEFLVEEKKRELERVATEEAERRRHAEEQQRMGEQRAAEQAAREQAKKEIELKKNKLQNLLSSARTHVDNLWHIEPSTYRQGDTVRLYYNRNSRPLMHSTEIWMHGGCNSWTDGLSIVERLVECDDENGDWWYANVHIPEKAFVLDWVFADGPPGNARNYDNNGRQDFHAILPNAMTNEEYWVEEENCIYTRLLHEIREREEAIKIKVEKRAKMKSEMKEKTMRMFLLSQKHIVYTEPLEIRAGTTVDVLYNPSNTVLNGKPEVWFRWSFNRWMHPSGVLPPKKMVKTEDGCHLKATVSVPSDAYMMDFVFSESEEGGIYDNRNGTDYHIPVSGSNAKEPPIHIVHIAVEMAPIAKVGGLADVVTSLSRAIQELGHHVEVILPKYNFMNQSNVKNLHVRQSFSLGGTEIKVWFGLVEDLSVYFLEPQNGMFGGGWVYGGNDAGRFGLFCQSALEFLLQSGSSPHIIHCHDWSSAPVAWLYKEHYAESRLATARIIFTIHNLEFGAHFIGKAMTYCDKATTVSHTYSKEVAGHGAIAPHRGKFYGILNGIDPDIWDPYTDNFIPMHYTSENVVEGKNAAKRALQQRFGLQQTDVPIVGIITRLTAQKGIHLIKHALHRTLERNGQVVLLGSAPDPRIQSDFCRLADSLHGENHGRVRLCLTYDEPLSHLIYAGSDFILVPSIFEPCGLTQLVAMRYGSIPIVRKTGGLYDTVFDVDHDKDRARVLGLEPNGFSFDGADCNGVDYALNRQQSLLGLKPAVGSTPSAKGSWSKTGPGTGLPWTTLNCTIQLTNFEAPIQRWQEKASIGRYYKLNETWLKVKIFYLSCRYKLTQTWFKVKIFYLSYTYICRIKTLYSMHKQLWEYVSAMFPILSFNYEYLI.

The transit peptide at 1-49 (MEMALRPQSLLCPRSRLKVVIRPASSASGGGLAQYFLMTRRYTGSRIVR) directs the protein to the chloroplast. A coiled-coil region spans residues 1007–1065 (KRELERVATEEAERRRHAEEQQRMGEQRAAEQAAREQAKKEIELKKNKLQNLLSSARTH). Positions 1014–1043 (ATEEAERRRHAEEQQRMGEQRAAEQAAREQ) are disordered.

Belongs to the glycosyltransferase 1 family. Bacterial/plant glycogen synthase subfamily. As to expression, expressed in the endosperm.

It localises to the plastid. The protein resides in the chloroplast. Its subcellular location is the amyloplast. The catalysed reaction is [(1-&gt;4)-alpha-D-glucosyl](n) + ADP-alpha-D-glucose = [(1-&gt;4)-alpha-D-glucosyl](n+1) + ADP + H(+). The protein operates within glycan biosynthesis; starch biosynthesis. Its function is as follows. Involved in starch synthesis in endosperm amyloplasts. Plays an important role in the elongation of amylopectin B chains. In Oryza sativa subsp. japonica (Rice), this protein is Soluble starch synthase 3a, chloroplastic/amyloplastic.